We begin with the raw amino-acid sequence, 385 residues long: Chaperone protein DnaJ (385 aa).

A J domain is found at 5–72 (DYYEVLGVGK…QKRAAYDQFG (68 aa)). The interval 26-48 (RKLAMKHHPDRNQGDGAKASEEK) is disordered. Residues 35–48 (DRNQGDGAKASEEK) are compositionally biased toward basic and acidic residues. The CR-type zinc-finger motif lies at 145–223 (GKESQIRIPT…CNGAGKVKKQ (79 aa)). Cys158, Cys161, Cys175, Cys178, Cys197, Cys200, Cys211, and Cys214 together coordinate Zn(2+). CXXCXGXG motif repeat units lie at residues 158 to 165 (CDTCHGSG), 175 to 182 (CTTCHGAG), 197 to 204 (CPHCHGSG), and 211 to 218 (CTSCNGAG). The disordered stretch occupies residues 362–385 (FRKGGDKHSPTSKSWTDRVKDLFK).

The protein belongs to the DnaJ family. In terms of assembly, homodimer. Requires Zn(2+) as cofactor.

It is found in the cytoplasm. Its function is as follows. Participates actively in the response to hyperosmotic and heat shock by preventing the aggregation of stress-denatured proteins and by disaggregating proteins, also in an autonomous, DnaK-independent fashion. Unfolded proteins bind initially to DnaJ; upon interaction with the DnaJ-bound protein, DnaK hydrolyzes its bound ATP, resulting in the formation of a stable complex. GrpE releases ADP from DnaK; ATP binding to DnaK triggers the release of the substrate protein, thus completing the reaction cycle. Several rounds of ATP-dependent interactions between DnaJ, DnaK and GrpE are required for fully efficient folding. Also involved, together with DnaK and GrpE, in the DNA replication of plasmids through activation of initiation proteins. The polypeptide is Chaperone protein DnaJ (Leptothrix cholodnii (strain ATCC 51168 / LMG 8142 / SP-6) (Leptothrix discophora (strain SP-6))).